Consider the following 780-residue polypeptide: Ral guanine nucleotide dissociation stimulator-like 2 (780 aa).

The interval 1–92 is disordered; sequence MLPRPLRLLW…PTPPPRSSRR (92 aa). A Phosphoserine modification is found at Ser13. Over residues 31 to 42 the composition is skewed to gly residues; that stretch reads GGGPGGRGVGGG. The span at 43–65 shows a compositional bias: acidic residues; it reads QEEEEEEEEDEAPVSVWDEEEDG. Residues 89-213 enclose the N-terminal Ras-GEF domain; that stretch reads SSRRLRAGTL…GSADLIRNLR (125 aa). Residues 244–516 form the Ras-GEF domain; that stretch reads LADHLAEQLT…HRVSCEVEPP (273 aa). Low complexity predominate over residues 596 to 613; it reads HSLADPSHLSPPASSPRP. 2 disordered regions span residues 596–651 and 741–769; these read HSLA…GASD and TATL…PRIK. Positions 651 to 738 constitute a Ras-associating domain; it reads DCRIIRVQME…HDFLLRQRRR (88 aa). The span at 741 to 758 shows a compositional bias: low complexity; it reads TATLGLTSSPSASGTPPS.

Interacts with SAMD9.

Its function is as follows. Probable guanine nucleotide exchange factor. Putative effector of Ras and/or Rap. Associates with the GTP-bound form of Rap 1A and H-Ras in vitro. The chain is Ral guanine nucleotide dissociation stimulator-like 2 (RGL2) from Canis lupus familiaris (Dog).